Here is a 123-residue protein sequence, read N- to C-terminus: UPF0102 protein APJL_1381 (123 aa).

It belongs to the UPF0102 family.

The protein is UPF0102 protein APJL_1381 of Actinobacillus pleuropneumoniae serotype 3 (strain JL03).